Reading from the N-terminus, the 346-residue chain is Tryptophan--tRNA ligase (346 aa).

Residues 21–23 and 30–31 contribute to the ATP site; these read QPT and GN. The short motif at 22–31 is the 'HIGH' region element; sequence PTADSYHLGN. Residue D147 participates in L-tryptophan binding. Residues 159-161, I198, and 207-211 contribute to the ATP site; these read GED and KMSKS. Positions 207–211 match the 'KMSKS' region motif; sequence KMSKS.

This sequence belongs to the class-I aminoacyl-tRNA synthetase family. In terms of assembly, homodimer.

The protein resides in the cytoplasm. It carries out the reaction tRNA(Trp) + L-tryptophan + ATP = L-tryptophyl-tRNA(Trp) + AMP + diphosphate + H(+). Its function is as follows. Catalyzes the attachment of tryptophan to tRNA(Trp). The chain is Tryptophan--tRNA ligase from Corynebacterium efficiens (strain DSM 44549 / YS-314 / AJ 12310 / JCM 11189 / NBRC 100395).